A 624-amino-acid polypeptide reads, in one-letter code: Protein POLLEN DEFECTIVE IN GUIDANCE 1 (624 aa).

The segment at 20 to 63 (SFENDDTSIRRSSSDPITGNVASESPRDYGKRKRSKKKKKKVNQ) is disordered. A compositionally biased stretch (polar residues) spans 33–42 (SDPITGNVAS). The segment covering 49–61 (GKRKRSKKKKKKV) has biased composition (basic residues). Helical transmembrane passes span 263–283 (VLIDTGFFVCVNSFLSLLTVM), 305–325 (ASELSDLACFLVLATGTILLG), 391–411 (FVSDLALTMAASILHSFILLA), 413–433 (AITLSTCIVAHNNALLALLVS), 545–565 (LTFVPLAPACVVIRVLTPVYA), and 578–598 (LWMVILFVITYIMLTSLKVLI).

The protein belongs to the TAPT1 family. As to quaternary structure, interacts with CRT3, but not with CRT1 or CNX. Expressed in inflorescences, siliques, roots and shoots. Expressed in early embryo, endosperm, mature pollen and pollen tubes, synergide cells and weakly in antipodal cells.

The protein localises to the membrane. It localises to the endoplasmic reticulum lumen. In terms of biological role, probable component of the calreticulin 3 (CRT3) complex, acting probably as a co-chaperone involved in protein retention in the endoplasmic reticulum lumen. Required for micropylar pollen tube guidance. Plays an essential role in cell plate orientation or positioning in early embryo patterning. This Arabidopsis thaliana (Mouse-ear cress) protein is Protein POLLEN DEFECTIVE IN GUIDANCE 1 (POD1).